The primary structure comprises 226 residues: Ras-related protein Rab11A (226 aa).

Residues 24–32 (GDSAVGKSQ), 43–49 (SLDSKST), 72–76 (DTAGQ), 130–133 (NKCD), and 160–162 (SAL) contribute to the GTP site. The short motif at 46–54 (SKSTIGVEF) is the Effector region element. S-geranylgeranyl cysteine attachment occurs at residues C222 and C223. C223 is subject to Cysteine methyl ester. A propeptide spans 224–226 (QAS) (removed in mature form).

It belongs to the small GTPase superfamily. Rab family.

The protein resides in the cell membrane. The sequence is that of Ras-related protein Rab11A (RAB11A) from Lotus japonicus (Lotus corniculatus var. japonicus).